The following is a 400-amino-acid chain: PHD finger protein 24 (400 aa).

Glycine 2 carries N-myristoyl glycine lipidation. Over residues 28–38 (LRDRPSIRRTG) the composition is skewed to basic and acidic residues. The segment at 28-99 (LRDRPSIRRT…PEEFDRTSRF (72 aa)) is disordered. The residue at position 36 (arginine 36) is an Omega-N-methylarginine. A Phosphoserine modification is found at serine 43. Threonine 47 bears the Phosphothreonine mark. Residue serine 51 is modified to Phosphoserine. Positions 78–97 (AWERLRDGRGVEPEEFDRTS) are enriched in basic and acidic residues. A PHD-type zinc finger spans residues 129 to 190 (NDEMCDVCEV…TGWSCHYCDN (62 aa)).

The chain is PHD finger protein 24 from Homo sapiens (Human).